A 167-amino-acid polypeptide reads, in one-letter code: Large ribosomal subunit protein uL10 (167 aa).

The protein belongs to the universal ribosomal protein uL10 family. As to quaternary structure, part of the ribosomal stalk of the 50S ribosomal subunit. The N-terminus interacts with L11 and the large rRNA to form the base of the stalk. The C-terminus forms an elongated spine to which L12 dimers bind in a sequential fashion forming a multimeric L10(L12)X complex.

Functionally, forms part of the ribosomal stalk, playing a central role in the interaction of the ribosome with GTP-bound translation factors. In Erwinia tasmaniensis (strain DSM 17950 / CFBP 7177 / CIP 109463 / NCPPB 4357 / Et1/99), this protein is Large ribosomal subunit protein uL10.